Consider the following 86-residue polypeptide: RNA-binding protein Hfq (86 aa).

Residues 10–71 (DLFLNNARKE…VSTIQPGKYI (62 aa)) form the Sm domain.

It belongs to the Hfq family. In terms of assembly, homohexamer.

RNA chaperone that binds small regulatory RNA (sRNAs) and mRNAs to facilitate mRNA translational regulation in response to envelope stress, environmental stress and changes in metabolite concentrations. Also binds with high specificity to tRNAs. The sequence is that of RNA-binding protein Hfq from Clostridioides difficile (strain 630) (Peptoclostridium difficile).